A 163-amino-acid polypeptide reads, in one-letter code: Small ribosomal subunit protein uS9 (163 aa).

The segment covering 1-25 (MAENTNNSAVTETEETTAAFTTETN) has biased composition (low complexity). Residues 1–40 (MAENTNNSAVTETEETTAAFTTETNSGAGTGTSTIAPGYG) are disordered.

This sequence belongs to the universal ribosomal protein uS9 family.

This Bifidobacterium animalis subsp. lactis (strain AD011) protein is Small ribosomal subunit protein uS9.